Reading from the N-terminus, the 428-residue chain is Dihydroorotase (428 aa).

His59 and His61 together coordinate Zn(2+). Substrate-binding positions include 61–63 (HFR) and Asn93. The Zn(2+) site is built by Asp151, His178, and His231. Asn277 is a binding site for substrate. Residue Asp304 coordinates Zn(2+). Asp304 is a catalytic residue. Residues His308 and 322-323 (FG) contribute to the substrate site.

The protein belongs to the metallo-dependent hydrolases superfamily. DHOase family. Class I DHOase subfamily. Zn(2+) serves as cofactor.

The catalysed reaction is (S)-dihydroorotate + H2O = N-carbamoyl-L-aspartate + H(+). It participates in pyrimidine metabolism; UMP biosynthesis via de novo pathway; (S)-dihydroorotate from bicarbonate: step 3/3. Functionally, catalyzes the reversible cyclization of carbamoyl aspartate to dihydroorotate. This chain is Dihydroorotase, found in Bacillus licheniformis (strain ATCC 14580 / DSM 13 / JCM 2505 / CCUG 7422 / NBRC 12200 / NCIMB 9375 / NCTC 10341 / NRRL NRS-1264 / Gibson 46).